Here is a 455-residue protein sequence, read N- to C-terminus: MALTMLNGLLIKDSSPPMLHQISKTPQLDAFNYQSCFMQDLFAHFPEVLFIHRTYNPRGKVLYTFLVDGPRVQVEGPLARAVYFAIPTNEDARGLAQMFQVFKKFNPAWERVNTILVDPHFLLLPTLTMEFPTAEVLLSAFHICKFLQGKFYQLPLEQPVQRLLLSSLQSTMCSATAGNLRKLYTLLNNCIPSSRLPELHSHWLLNDRIWLAHRWRSRAQSSRYFQSLEIMAHILSQFFGTTPFEKQGMASVFRYMQQNSSDKASLSLAETPQDSHTPSEASAENPNTEQLVEARIQHSLNAICTGPAAQLCLGELAVVQKSMHLIGSGSEKMSIQILEDTHTVQPQPPASCSCYFNQAFHLPCRHILAMLSARQQVLQPDMLPAQWTSGCASSLDSILGSKWSASLDKHLAVTLLTEEVGRLLQHCSEEEFERRYSTLRELADNWIGPYEQVQL.

A disordered region spans residues 264 to 288 (ASLSLAETPQDSHTPSEASAENPNT). The segment at 333–375 (MSIQILEDTHTVQPQPPASCSCYFNQAFHLPCRHILAMLSARQ) adopts an SWIM-type zinc-finger fold.

This chain is Zinc finger SWIM domain-containing protein 1 (Zswim1), found in Mus musculus (Mouse).